A 353-amino-acid polypeptide reads, in one-letter code: MAQAKMQHPVSWVIFAGMAALLLFQGVPVRSGDATFPKAMDNVTVRQGESATLRCSVDNRVTRVAWLNRSSILYAGNDKWCLDPRVVLLANTKTQYSIQIHDVDVYDEGPYTCSVQTDNHPKTSRVHLIVQVSPKITETSSDISINEGGNVSLTCIATGRPDPTITWRHISPKAVGFISEDEYLEITGITREQSGEYECSASNDVAAPVVQRVKVTVNYPPYISDAKSTGVPVGQKGILMCEASAVPSADFQWYKDDKRLAEGQKGLKVENKAFFSRLTFFNVSEQDYGNYTCVASNQLGNTNASMILYEETTTALTPWKGPGAVHDGNSGAWRRGSCAWLLALPLAQLARQF.

The first 28 residues, 1-28 (MAQAKMQHPVSWVIFAGMAALLLFQGVP), serve as a signal peptide directing secretion. Ig-like C2-type domains are found at residues 37 to 124 (PKAM…PKTS), 134 to 216 (PKIT…VKVT), and 220 to 314 (PPYI…ETTT). Asn-42, Asn-68, and Asn-150 each carry an N-linked (GlcNAc...) asparagine glycan. Cysteines 55 and 113 form a disulfide. Intrachain disulfides connect Cys-155/Cys-199 and Cys-241/Cys-293. 3 N-linked (GlcNAc...) asparagine glycosylation sites follow: Asn-282, Asn-290, and Asn-303. Ser-330 carries the GPI-anchor amidated serine lipid modification. A propeptide spans 331–353 (GAWRRGSCAWLLALPLAQLARQF) (removed in mature form).

The protein belongs to the immunoglobulin superfamily. IgLON family. As to quaternary structure, interacts with NEGR1. Found on the dendrites, somata and axons of developing Purkinje cells. Undetectable on other neurons like Golgi or granule cells.

It localises to the cell membrane. It may be a cellular address molecule specific to Purkinje cells. It may represent a receptor or a subunit of a receptor complex. The polypeptide is Protein CEPU-1 (Gallus gallus (Chicken)).